The following is a 203-amino-acid chain: MMQDVSSSPVSPADDSLSNSEEEPDRQQPQSGKRGGRKRRSSRRSAGGGAGPGGAAGGGVGGGDEPGSPAQGKRGKKSAGCGGGGGSAGGGGGSSSGGGSPQSYEELQTQRVMANVRERQRTQSLNEAFAALRKIIPTLPSDKLSKIQTLKLAARYIDFLYQVLQSDELDSKMASCSYVAHERLSYAFSVWRMEGAWSMSASH.

Low complexity predominate over residues 1–18 (MMQDVSSSPVSPADDSLS). Residues 1–106 (MMQDVSSSPV…GGGSPQSYEE (106 aa)) are disordered. Over residues 34 to 43 (RGGRKRRSSR) the composition is skewed to basic residues. 2 stretches are compositionally biased toward gly residues: residues 46 to 65 (AGGG…GGDE) and 80 to 100 (GCGG…GGGS). Positions 109-160 (TQRVMANVRERQRTQSLNEAFAALRKIIPTLPSDKLSKIQTLKLAARYIDFL) constitute a bHLH domain. Residues 162–192 (QVLQSDELDSKMASCSYVAHERLSYAFSVWR) are sufficient for transactivation activity.

As to quaternary structure, efficient DNA binding requires dimerization with another bHLH protein. Homodimer or heterodimer with E proteins such as TCF3. ID1 binds preferentially to TCF3 but does not interact efficiently with TWIST1 so ID1 levels control the amount of TCF3 available to dimerize with TWIST and thus determine the type of dimer formed.

Its subcellular location is the nucleus. Functionally, acts as a transcriptional regulator. Inhibits myogenesis by sequestrating E proteins, inhibiting trans-activation by MEF2, and inhibiting DNA-binding by MYOD1 through physical interaction. This interaction probably involves the basic domains of both proteins. Also represses expression of pro-inflammatory cytokines such as TNFA and IL1B. Regulates cranial suture patterning and fusion. Activates transcription as a heterodimer with E proteins. Regulates gene expression differentially, depending on dimer composition. Homodimers induce expression of FGFR2 and POSTN while heterodimers repress FGFR2 and POSTN expression and induce THBS1 expression. Heterodimerization is also required for osteoblast differentiation. Represses the activity of the circadian transcriptional activator: NPAS2-BMAL1 heterodimer. This Saguinus oedipus (Cotton-top tamarin) protein is Twist-related protein 1 (TWIST1).